The following is a 172-amino-acid chain: Small ribosomal subunit protein uS5 (172 aa).

One can recognise an S5 DRBM domain in the interval 17–80 (LKEKMIQVNR…DAARRDMVKV (64 aa)).

It belongs to the universal ribosomal protein uS5 family. Part of the 30S ribosomal subunit. Contacts proteins S4 and S8.

With S4 and S12 plays an important role in translational accuracy. Functionally, located at the back of the 30S subunit body where it stabilizes the conformation of the head with respect to the body. The sequence is that of Small ribosomal subunit protein uS5 from Methylibium petroleiphilum (strain ATCC BAA-1232 / LMG 22953 / PM1).